Here is a 369-residue protein sequence, read N- to C-terminus: Tyrosine-protein phosphatase non-receptor type 5 (369 aa).

At S49 the chain carries Phosphoserine; by PKA. Position 59 is a phosphothreonine; by MAPK (T59). S72 is subject to Phosphoserine; by MAPK. Residues 104-359 (LQAEFFEIPM…QFVHHAMSLY (256 aa)) form the Tyrosine-protein phosphatase domain. Substrate is bound by residues D265, 300 to 306 (CSAGIGR), and Q344. C300 serves as the catalytic Phosphocysteine intermediate.

This sequence belongs to the protein-tyrosine phosphatase family. Non-receptor class subfamily. In terms of processing, phosphorylation at Ser-49 by PKA deactivates PTPN5. Phosphorylation at Thr-59 and Ser-72 by MAPKs stabilizes the phosphatase, dephosphorylation of these sites results in ubiquitin-mediated degradation of the active phosphatase. As to expression, expressed in the central nervous system except in the cerebellum. Enriched within the striatum relative to other brain areas.

The protein localises to the cytoplasm. The catalysed reaction is O-phospho-L-tyrosyl-[protein] + H2O = L-tyrosyl-[protein] + phosphate. Its function is as follows. May regulate the activity of several effector molecules involved in synaptic plasticity and neuronal cell survival, including MAPKs, Src family kinases and NMDA receptors. The protein is Tyrosine-protein phosphatase non-receptor type 5 (Ptpn5) of Rattus norvegicus (Rat).